Here is a 389-residue protein sequence, read N- to C-terminus: NADH-quinone oxidoreductase subunit D (389 aa).

It belongs to the complex I 49 kDa subunit family. NDH-1 is composed of 14 different subunits. Subunits NuoB, C, D, E, F, and G constitute the peripheral sector of the complex.

It is found in the cell inner membrane. It carries out the reaction a quinone + NADH + 5 H(+)(in) = a quinol + NAD(+) + 4 H(+)(out). In terms of biological role, NDH-1 shuttles electrons from NADH, via FMN and iron-sulfur (Fe-S) centers, to quinones in the respiratory chain. The immediate electron acceptor for the enzyme in this species is believed to be ubiquinone. Couples the redox reaction to proton translocation (for every two electrons transferred, four hydrogen ions are translocated across the cytoplasmic membrane), and thus conserves the redox energy in a proton gradient. This chain is NADH-quinone oxidoreductase subunit D, found in Rickettsia prowazekii (strain Madrid E).